Reading from the N-terminus, the 495-residue chain is Leucine aminopeptidase 2 (495 aa).

A signal peptide spans 1–21 (MKSQLLSLAVAVSTISQGVVG). The region spanning 124–218 (PPANKIMAEL…EDGKNLASLV (95 aa)) is the PA domain. Residues Asn142 and Asn235 are each glycosylated (N-linked (GlcNAc...) asparagine). Residues His259 and Asp271 each contribute to the Zn(2+) site. A glycan (N-linked (GlcNAc...) asparagine) is linked at Asn272. The active-site Proton acceptor is Glu303. Zn(2+)-binding residues include Glu304 and Asp332. Residue Asn352 is glycosylated (N-linked (GlcNAc...) asparagine). Position 430 (His430) interacts with Zn(2+).

It belongs to the peptidase M28 family. M28A subfamily. As to quaternary structure, monomer. Requires Zn(2+) as cofactor.

The protein localises to the secreted. Its function is as follows. Extracellular aminopeptidase that releases a wide variety of amino acids from natural peptides and contributes to pathogenicity. The protein is Leucine aminopeptidase 2 (LAP2) of Trichophyton tonsurans (Scalp ringworm fungus).